We begin with the raw amino-acid sequence, 388 residues long: Flavin oxidoreductase hxnT (388 aa).

It belongs to the NADH:flavin oxidoreductase/NADH oxidase family. It depends on FMN as a cofactor.

Its function is as follows. Flavin oxidoreductase, part of the hnx cluster involved in the purine degradation. The nicotinate hydroxylase hnxS accepts nicotinate as a substrate and catalyzes the first step of nicotinate catabolism. The major facilitator-type transporters hxnP and hxnZ are probably involved in the uptake of nicotinate-derived metabolites, and the oxidoreductases hxnT and hxnY in the further metabolism of 6-OH nicotinic acid. The protein is Flavin oxidoreductase hxnT of Emericella nidulans (strain FGSC A4 / ATCC 38163 / CBS 112.46 / NRRL 194 / M139) (Aspergillus nidulans).